The sequence spans 25 residues: Pregnancy-associated glycoprotein 74 (25 aa).

N-linked (GlcNAc...) asparagine glycosylation is found at N4 and N21.

It belongs to the peptidase A1 family. Post-translationally, N-glycosylated. Placental cotyledons.

It localises to the secreted. The protein localises to the extracellular space. In Bison bison (American bison), this protein is Pregnancy-associated glycoprotein 74.